The primary structure comprises 1104 residues: Inhibitory regulator protein BUD2/CLA2 (1104 aa).

Ser-2 is subject to N-acetylserine. Residues 316-444 enclose the C2 domain; it reads RSEYLSITGS…RYNKETRLPI (129 aa). The region spanning 536 to 753 is the Ras-GAP domain; that stretch reads AKIDGTVSRI…NDLLDYIDKM (218 aa). At Ser-854 the chain carries Phosphoserine. Positions 1027–1104 are disordered; the sequence is NPKSSNKTSV…FKKKKETGGS (78 aa). Composition is skewed to polar residues over residues 1029 to 1043 and 1052 to 1069; these read KSSNKTSVHGTSSEN and LPNSQGKGNLGNRFSPTK. Basic residues predominate over residues 1090-1104; the sequence is KLTRWFKKKKETGGS.

In terms of biological role, stimulates the GTPase activity of BUD1/RSR1. Participates in the regulation of bud-site selection. In Saccharomyces cerevisiae (strain ATCC 204508 / S288c) (Baker's yeast), this protein is Inhibitory regulator protein BUD2/CLA2 (BUD2).